The sequence spans 218 residues: Eukaryotic translation initiation factor 3 subunit K (218 aa).

A2 is modified (N-acetylalanine). At T28 the chain carries Phosphothreonine. Residues 42-204 enclose the PCI domain; the sequence is YDLEANLAVL…SIKPKNIVEK (163 aa). The residue at position 217 (S217) is a Phosphoserine.

Component of the eukaryotic translation initiation factor 3 (eIF-3) complex, which is composed of 13 subunits: EIF3A, EIF3B, EIF3C, EIF3D, EIF3E, EIF3F, EIF3G, EIF3H, EIF3I, EIF3J, EIF3K, EIF3L and EIF3M. The eIF-3 complex appears to include 3 stable modules: module A is composed of EIF3A, EIF3B, EIF3G and EIF3I; module B is composed of EIF3F, EIF3H, and EIF3M; and module C is composed of EIF3C, EIF3D, EIF3E, EIF3K and EIF3L. EIF3C of module C binds EIF3B of module A and EIF3H of module B, thereby linking the three modules. EIF3J is a labile subunit that binds to the eIF-3 complex via EIF3B. The eIF-3 complex interacts with RPS6KB1 under conditions of nutrient depletion. Mitogenic stimulation leads to binding and activation of a complex composed of MTOR and RPTOR, leading to phosphorylation and release of RPS6KB1 and binding of EIF4B to eIF-3. Interacts with CCND3, but not with CCND1 and CCND2. As to expression, ubiquitous, with the highest levels of expression in brain, testis and kidney.

The protein localises to the nucleus. It localises to the cytoplasm. Its function is as follows. Component of the eukaryotic translation initiation factor 3 (eIF-3) complex, which is required for several steps in the initiation of protein synthesis. The eIF-3 complex associates with the 40S ribosome and facilitates the recruitment of eIF-1, eIF-1A, eIF-2:GTP:methionyl-tRNAi and eIF-5 to form the 43S pre-initiation complex (43S PIC). The eIF-3 complex stimulates mRNA recruitment to the 43S PIC and scanning of the mRNA for AUG recognition. The eIF-3 complex is also required for disassembly and recycling of post-termination ribosomal complexes and subsequently prevents premature joining of the 40S and 60S ribosomal subunits prior to initiation. The eIF-3 complex specifically targets and initiates translation of a subset of mRNAs involved in cell proliferation, including cell cycling, differentiation and apoptosis, and uses different modes of RNA stem-loop binding to exert either translational activation or repression. This chain is Eukaryotic translation initiation factor 3 subunit K, found in Homo sapiens (Human).